The primary structure comprises 346 residues: Ketol-acid reductoisomerase (NADP(+)) (346 aa).

Residues lysine 1 to serine 141 enclose the KARI N-terminal Rossmann domain. Residues serine 11 and aspartate 41–glutamine 43 contribute to the NADP(+) site. The active site involves histidine 65. Glycine 91 is a binding site for NADP(+). 2 consecutive KARI C-terminal knotted domains span residues serine 142–glutamate 286 and tyrosine 287–isoleucine 346. Mg(2+)-binding residues include aspartate 150, glutamate 154, glutamate 322, and glutamate 326.

It belongs to the ketol-acid reductoisomerase family. Mg(2+) is required as a cofactor.

It carries out the reaction (2R)-2,3-dihydroxy-3-methylbutanoate + NADP(+) = (2S)-2-acetolactate + NADPH + H(+). It catalyses the reaction (2R,3R)-2,3-dihydroxy-3-methylpentanoate + NADP(+) = (S)-2-ethyl-2-hydroxy-3-oxobutanoate + NADPH + H(+). Its pathway is amino-acid biosynthesis; L-isoleucine biosynthesis; L-isoleucine from 2-oxobutanoate: step 2/4. It participates in amino-acid biosynthesis; L-valine biosynthesis; L-valine from pyruvate: step 2/4. Its function is as follows. Involved in the biosynthesis of branched-chain amino acids (BCAA). Catalyzes an alkyl-migration followed by a ketol-acid reduction of (S)-2-acetolactate (S2AL) to yield (R)-2,3-dihydroxy-isovalerate. In the isomerase reaction, S2AL is rearranged via a Mg-dependent methyl migration to produce 3-hydroxy-3-methyl-2-ketobutyrate (HMKB). In the reductase reaction, this 2-ketoacid undergoes a metal-dependent reduction by NADPH to yield (R)-2,3-dihydroxy-isovalerate. This chain is Ketol-acid reductoisomerase (NADP(+)) (ilvC), found in Buchnera aphidicola subsp. Uroleucon rurale.